The chain runs to 411 residues: UPF0754 membrane protein Npun_R4433 (411 aa).

2 helical membrane-spanning segments follow: residues 3–23 (WSHLWLYVSPPVLGGIIGYFT) and 387–407 (IVTLGGVLGFVIGLLQTVFLV).

The protein belongs to the UPF0754 family.

The protein resides in the cell inner membrane. The sequence is that of UPF0754 membrane protein Npun_R4433 from Nostoc punctiforme (strain ATCC 29133 / PCC 73102).